The sequence spans 425 residues: CinA-like protein (425 aa).

It belongs to the CinA family.

The sequence is that of CinA-like protein from Desulfovibrio desulfuricans (strain ATCC 27774 / DSM 6949 / MB).